The following is a 670-amino-acid chain: MDIFLVVLVLLTIIAISNIVNRFIPFIPVPLIQVALGILAASFPQGLHFELNTELFFVLFIAPLLFNDGKRTPRAELWNLRAPILLLALGLVFATVIVGGYTIHWMIPAIPLAAAFGLAAILSPTDVVAVSALSGRVKMPKGILRLLEGEGLMNDASGLVAFKFAIAAAVTGAFSLAQAAVSFVFISLGGLLCGVVISFLIIRFRLFLRRLGMQDVTMHMLIQILTPFVIYLAAEEIGVSGILAVVAGGITHAVEQDRLESTMIKLQIVSSSTWNIILFILNGLVFVILGTQIPDVISVIFNDTAISNMKVIGYILVITFTLMLLRFLWVLFFWNGKWFFNKDQNIYKPGLRSTLLISISGVRGAVTLAGSFSIPYFLEDGTPFPERNLILFLAAGVILCTLVIATVVLPILTEKEEEDEERNKKLLTARRKLIKTALQTIKEDMNETNKTASLAVIAEYNEKMKNLRFQQYTSSNRIKKHERKVRAQGVKAEQEALMKMLERGDIPEETANVLQERFNELEILYANPFKVGLSKTRLKRLMYWIFFGEHKKPEMSILNEAGLIRATRVKTAKAAIEYLEKHKTDEHKEVFLSVITFYKQLIFRLEHSHHELKSSAHFENQKLEVKLKAVQAIRNEIQTLFEEREISRDISHELRQYINDVEAAMLEGGE.

The next 11 membrane-spanning stretches (helical) occupy residues 5-27, 46-66, 83-103, 105-125, 156-176, 182-202, 228-248, 276-296, 314-334, 355-375, and 389-409; these read LVVL…IPFI, GLHF…PLLF, PILL…GYTI, WMIP…LSPT, ASGL…AFSL, SFVF…FLII, FVIY…VVAG, IILF…IPDV, YILV…LFFW, LLIS…FSIP, and LILF…TVVL.

This sequence belongs to the monovalent cation:proton antiporter 1 (CPA1) transporter (TC 2.A.36) family. Nhak (TC 2.A.36.3.2) subfamily.

The protein localises to the cell membrane. Functionally, transporter involved in the efflux of sodium, potassium, lithium and rubidium. This chain is Sodium, potassium, lithium and rubidium/H(+) antiporter (nhaK), found in Bacillus subtilis (strain 168).